The sequence spans 782 residues: E3 ubiquitin-protein ligase SopA (782 aa).

Residues 137–171 (VSVSANNRPTVSEGRTPPVSPSLSLQATSSPSSPA) are disordered. Residues 157 to 171 (PSLSLQATSSPSSPA) show a composition bias toward low complexity. Catalysis depends on C753, which acts as the Glycyl thioester intermediate.

Belongs to the SopA E3 ligase family. In terms of processing, ubiquitinated in the presence of host E1 ubiquitin-activating enzyme, E2 ubiquitin-conjugating enzyme and ubiquitin.

It localises to the secreted. The protein localises to the host cell. It carries out the reaction S-ubiquitinyl-[E2 ubiquitin-conjugating enzyme]-L-cysteine + [acceptor protein]-L-lysine = [E2 ubiquitin-conjugating enzyme]-L-cysteine + N(6)-ubiquitinyl-[acceptor protein]-L-lysine.. In terms of biological role, effector proteins function to alter host cell physiology and promote bacterial survival in host tissues. This protein is an E3 ubiquitin ligase that interferes with host's ubiquitination pathway. This chain is E3 ubiquitin-protein ligase SopA (sopA), found in Salmonella dublin (strain CT_02021853).